The chain runs to 465 residues: Mitochondrial distribution and morphology protein 10 (465 aa).

The protein belongs to the MDM10 family. Component of the ER-mitochondria encounter structure (ERMES) or MDM complex, composed of MMM1, MDM10, MDM12 and MDM34. Associates with the mitochondrial outer membrane sorting assembly machinery SAM(core) complex.

It is found in the mitochondrion outer membrane. Functionally, component of the ERMES/MDM complex, which serves as a molecular tether to connect the endoplasmic reticulum and mitochondria. Components of this complex are involved in the control of mitochondrial shape and protein biogenesis and may function in phospholipid exchange. MDM10 is involved in the late assembly steps of the general translocase of the mitochondrial outer membrane (TOM complex). Functions in the TOM40-specific route of the assembly of outer membrane beta-barrel proteins, including the association of TOM40 with the receptor TOM22 and small TOM proteins. Can associate with the SAM(core) complex as well as the MDM12-MMM1 complex, both involved in late steps of the major beta-barrel assembly pathway, that is responsible for biogenesis of all outer membrane beta-barrel proteins. May act as a switch that shuttles between both complexes and channels precursor proteins into the TOM40-specific pathway. Plays a role in mitochondrial morphology and in the inheritance of mitochondria. The protein is Mitochondrial distribution and morphology protein 10 of Eremothecium gossypii (strain ATCC 10895 / CBS 109.51 / FGSC 9923 / NRRL Y-1056) (Yeast).